Reading from the N-terminus, the 380-residue chain is Putative 8-amino-7-oxononanoate synthase (380 aa).

A substrate-binding site is contributed by arginine 18. Residue 106–107 (GY) coordinates pyridoxal 5'-phosphate. Histidine 131 serves as a coordination point for substrate. Residues serine 179, 205 to 208 (DEAH), and 236 to 239 (TFGK) each bind pyridoxal 5'-phosphate. Lysine 239 is modified (N6-(pyridoxal phosphate)lysine). Threonine 352 serves as a coordination point for substrate.

Belongs to the class-II pyridoxal-phosphate-dependent aminotransferase family. BioF subfamily. In terms of assembly, homodimer. The cofactor is pyridoxal 5'-phosphate.

It carries out the reaction 6-carboxyhexanoyl-[ACP] + L-alanine + H(+) = (8S)-8-amino-7-oxononanoate + holo-[ACP] + CO2. It functions in the pathway cofactor biosynthesis; biotin biosynthesis. Catalyzes the decarboxylative condensation of pimeloyl-[acyl-carrier protein] and L-alanine to produce 8-amino-7-oxononanoate (AON), [acyl-carrier protein], and carbon dioxide. The protein is Putative 8-amino-7-oxononanoate synthase (bioF) of Neisseria gonorrhoeae (strain NCCP11945).